We begin with the raw amino-acid sequence, 346 residues long: Biotin synthase (346 aa).

Residues 38–256 (RQVQVSTLLS…IAVARIMMPT (219 aa)) enclose the Radical SAM core domain. Residues Cys-53, Cys-57, and Cys-60 each contribute to the [4Fe-4S] cluster site. [2Fe-2S] cluster-binding residues include Cys-97, Cys-128, Cys-188, and Arg-260.

It belongs to the radical SAM superfamily. Biotin synthase family. In terms of assembly, homodimer. The cofactor is [4Fe-4S] cluster. It depends on [2Fe-2S] cluster as a cofactor.

The enzyme catalyses (4R,5S)-dethiobiotin + (sulfur carrier)-SH + 2 reduced [2Fe-2S]-[ferredoxin] + 2 S-adenosyl-L-methionine = (sulfur carrier)-H + biotin + 2 5'-deoxyadenosine + 2 L-methionine + 2 oxidized [2Fe-2S]-[ferredoxin]. It participates in cofactor biosynthesis; biotin biosynthesis; biotin from 7,8-diaminononanoate: step 2/2. Its function is as follows. Catalyzes the conversion of dethiobiotin (DTB) to biotin by the insertion of a sulfur atom into dethiobiotin via a radical-based mechanism. This chain is Biotin synthase, found in Escherichia fergusonii (strain ATCC 35469 / DSM 13698 / CCUG 18766 / IAM 14443 / JCM 21226 / LMG 7866 / NBRC 102419 / NCTC 12128 / CDC 0568-73).